A 308-amino-acid polypeptide reads, in one-letter code: Transaldolase (308 aa).

The active-site Schiff-base intermediate with substrate is K125.

Belongs to the transaldolase family. Type 1 subfamily. In terms of assembly, homodimer.

The protein localises to the cytoplasm. The enzyme catalyses D-sedoheptulose 7-phosphate + D-glyceraldehyde 3-phosphate = D-erythrose 4-phosphate + beta-D-fructose 6-phosphate. It functions in the pathway carbohydrate degradation; pentose phosphate pathway; D-glyceraldehyde 3-phosphate and beta-D-fructose 6-phosphate from D-ribose 5-phosphate and D-xylulose 5-phosphate (non-oxidative stage): step 2/3. In terms of biological role, transaldolase is important for the balance of metabolites in the pentose-phosphate pathway. The sequence is that of Transaldolase from Pseudomonas putida (strain GB-1).